We begin with the raw amino-acid sequence, 577 residues long: Adenine deaminase (577 aa).

The protein belongs to the metallo-dependent hydrolases superfamily. Adenine deaminase family. Mn(2+) is required as a cofactor.

It carries out the reaction adenine + H2O + H(+) = hypoxanthine + NH4(+). The polypeptide is Adenine deaminase (Geobacillus kaustophilus (strain HTA426)).